A 371-amino-acid polypeptide reads, in one-letter code: Alanine dehydrogenase (371 aa).

2 residues coordinate substrate: Arg-15 and Lys-75. The active-site Proton donor/acceptor is the His-96. NAD(+)-binding positions include Ser-134, 178-179, Asp-198, Ser-220, 239-240, 267-270, Arg-279, and 298-301; these read TA, VL, IAID, and VANM. Asp-270 functions as the Proton donor/acceptor in the catalytic mechanism.

It belongs to the AlaDH/PNT family. In terms of assembly, homohexamer. Trimer of dimers.

It localises to the cytoplasm. It catalyses the reaction L-alanine + NAD(+) + H2O = pyruvate + NH4(+) + NADH + H(+). The protein operates within amino-acid degradation; L-alanine degradation via dehydrogenase pathway; NH(3) and pyruvate from L-alanine: step 1/1. Functionally, catalyzes the reversible reductive amination of pyruvate to L-alanine. Required for proficient utilization of D- or L-alanine as a nitrogen source. May be required for the adaptation from aerobic growth to anaerobic dormancy. It could be involved in the maintenance of the NAD pool during the shift to an anaerobic dormant state in which oxygen as a terminal electron acceptor becomes limiting. In Mycolicibacterium smegmatis (strain ATCC 700084 / mc(2)155) (Mycobacterium smegmatis), this protein is Alanine dehydrogenase.